A 345-amino-acid polypeptide reads, in one-letter code: Phosphoribosylformylglycinamidine cyclo-ligase (345 aa).

This sequence belongs to the AIR synthase family.

The protein resides in the cytoplasm. It carries out the reaction 2-formamido-N(1)-(5-O-phospho-beta-D-ribosyl)acetamidine + ATP = 5-amino-1-(5-phospho-beta-D-ribosyl)imidazole + ADP + phosphate + H(+). It participates in purine metabolism; IMP biosynthesis via de novo pathway; 5-amino-1-(5-phospho-D-ribosyl)imidazole from N(2)-formyl-N(1)-(5-phospho-D-ribosyl)glycinamide: step 2/2. The sequence is that of Phosphoribosylformylglycinamidine cyclo-ligase from Histophilus somni (strain 2336) (Haemophilus somnus).